Reading from the N-terminus, the 448-residue chain is MLLLRRLNRVRIASPYSVRLLSVKPISNVDDAKFRSQEEEDQSSYDQKTVCEALTCYSNDWQKALEFFNWVERESGFRHTTETFNRVIDILGKYFEFEISWALINRMIGNTESVPNHVTFRIVFKRYVTAHLVQEAIDAYDKLDDFNLRDETSFYNLVDALCEHKHVVEAEELCFGKNVIGNGFSVSNTKIHNLILRGWSKLGWWGKCKEYWKKMDTEGVTKDLFSYSIYMDIMCKSGKPWKAVKLYKEMKSRRMKLDVVAYNTVIRAIGASQGVEFGIRVFREMRERGCEPNVATHNTIIKLLCEDGRMRDAYRMLDEMPKRGCQPDSITYMCLFSRLEKPSEILSLFGRMIRSGVRPKMDTYVMLMRKFERWGFLQPVLYVWKTMKESGDTPDSAAYNAVIDALIQKGMLDMAREYEEEMIERGLSPRRRPELVEKSLDETLVCRE.

The N-terminal 21 residues, 1–21 (MLLLRRLNRVRIASPYSVRLL), are a transit peptide targeting the mitochondrion. PPR repeat units lie at residues 80–110 (TTETFNRVIDILGKYFEFEISWALINRMIGN), 116–146 (NHVTFRIVFKRYVTAHLVQEAIDAYDKLDDF), 150–186 (DETSFYNLVDALCEHKHVVEAEELCFGKNVIGNGFSV), 188–222 (NTKIHNLILRGWSKLGWWGKCKEYWKKMDTEGVTK), 223–257 (DLFSYSIYMDIMCKSGKPWKAVKLYKEMKSRRMKL), 258–292 (DVVAYNTVIRAIGASQGVEFGIRVFREMRERGCEP), 293–327 (NVATHNTIIKLLCEDGRMRDAYRMLDEMPKRGCQP), 331–359 (TYMCLFSRLEKPSEILSLFGRMIRSGVRP), 360–394 (KMDTYVMLMRKFERWGFLQPVLYVWKTMKESGDTP), and 395–429 (DSAAYNAVIDALIQKGMLDMAREYEEEMIERGLSP).

It belongs to the PPR family. P subfamily.

It is found in the mitochondrion. This Arabidopsis thaliana (Mouse-ear cress) protein is Pentatricopeptide repeat-containing protein At1g80550, mitochondrial.